The chain runs to 125 residues: Large ribosomal subunit protein bL12 (125 aa).

It belongs to the bacterial ribosomal protein bL12 family. In terms of assembly, homodimer. Part of the ribosomal stalk of the 50S ribosomal subunit. Forms a multimeric L10(L12)X complex, where L10 forms an elongated spine to which 2 to 4 L12 dimers bind in a sequential fashion. Binds GTP-bound translation factors.

Functionally, forms part of the ribosomal stalk which helps the ribosome interact with GTP-bound translation factors. Is thus essential for accurate translation. This is Large ribosomal subunit protein bL12 from Campylobacter concisus (strain 13826).